Consider the following 414-residue polypeptide: Probable tRNA pseudouridine synthase D (414 aa).

Residue Asp90 is the Nucleophile of the active site. The TRUD domain maps to 162-382 (GFPNFFGVQR…SSGDYRIISA (221 aa)).

The protein belongs to the pseudouridine synthase TruD family.

It carries out the reaction uridine(13) in tRNA = pseudouridine(13) in tRNA. Its function is as follows. Could be responsible for synthesis of pseudouridine from uracil-13 in transfer RNAs. The protein is Probable tRNA pseudouridine synthase D of Picrophilus torridus (strain ATCC 700027 / DSM 9790 / JCM 10055 / NBRC 100828 / KAW 2/3).